The following is a 330-amino-acid chain: Putative aminohydrolase AF_1775 (330 aa).

Residues His-54, His-56, His-181, and Asp-253 each coordinate Zn(2+).

Belongs to the metallo-dependent hydrolases superfamily. ATZ/TRZ family.

The protein is Putative aminohydrolase AF_1775 of Archaeoglobus fulgidus (strain ATCC 49558 / DSM 4304 / JCM 9628 / NBRC 100126 / VC-16).